A 139-amino-acid chain; its full sequence is ATP synthase epsilon chain (139 aa).

A disordered region spans residues 89–110; that stretch reads EARAEQARAEAEARRREAQSEH.

Belongs to the ATPase epsilon chain family. In terms of assembly, F-type ATPases have 2 components, CF(1) - the catalytic core - and CF(0) - the membrane proton channel. CF(1) has five subunits: alpha(3), beta(3), gamma(1), delta(1), epsilon(1). CF(0) has three main subunits: a, b and c.

It is found in the cell membrane. Its function is as follows. Produces ATP from ADP in the presence of a proton gradient across the membrane. The polypeptide is ATP synthase epsilon chain (Chloroflexus aggregans (strain MD-66 / DSM 9485)).